Consider the following 469-residue polypeptide: Keratin, type II cytoskeletal 7 (469 aa).

N-acetylserine is present on S2. S2, S6, and S7 each carry phosphoserine. The interval 2–90 (SIHFSSPVFT…DPSLQRVRQE (89 aa)) is head. Residue S12 is glycosylated (O-linked (GlcNAc) serine). At R20 the chain carries Dimethylated arginine; alternate. R20 carries the post-translational modification Omega-N-methylarginine; alternate. Residues S53, S71, and S83 each carry the phosphoserine modification. Residues 90–126 (EEREQIKTLNNKFASFIDKVRFLEQQNKLLETKWTLL) form a coil 1A region. The region spanning 91 to 403 (EREQIKTLNN…KLLEGEESRL (313 aa)) is the IF rod domain. At T97 the chain carries Phosphothreonine. Positions 127–144 (QEQKSAKSSRLPDIFEAQ) are linker 1. K130 participates in a covalent cross-link: Glycyl lysine isopeptide (Lys-Gly) (interchain with G-Cter in SUMO2). A coil 1B region spans residues 145–236 (IAGLRGQLEA…TLNETELTEL (92 aa)). K179 is subject to N6-acetyllysine. The segment at 237 to 260 (QSQISDTSVVLSMDNSRSLDLDGI) is linker 12. S252 and S254 each carry phosphoserine. The coil 2 stretch occupies residues 261–399 (IAEVKAQYEE…ATYRKLLEGE (139 aa)). Residues K265 and K286 each participate in a glycyl lysine isopeptide (Lys-Gly) (interchain with G-Cter in SUMO2) cross-link. Residue T289 is modified to Phosphothreonine. Glycyl lysine isopeptide (Lys-Gly) (interchain with G-Cter in SUMO2) cross-links involve residues K296 and K331. The tract at residues 400 to 469 (ESRLAGDGVG…ASASRRSARN (70 aa)) is tail.

This sequence belongs to the intermediate filament family. Heterotetramer of two type I and two type II keratins. Interacts with eukaryotic translation initiator factor 3 (eIF3) subunit EIF3S10. Interacts with GPER1. In terms of processing, arg-20 is dimethylated, probably to asymmetric dimethylarginine.

In terms of biological role, blocks interferon-dependent interphase and stimulates DNA synthesis in cells. This is Keratin, type II cytoskeletal 7 from Pan troglodytes (Chimpanzee).